The chain runs to 215 residues: Protein-L-isoaspartate O-methyltransferase (215 aa).

S62 is an active-site residue.

It belongs to the methyltransferase superfamily. L-isoaspartyl/D-aspartyl protein methyltransferase family.

The protein resides in the cytoplasm. It catalyses the reaction [protein]-L-isoaspartate + S-adenosyl-L-methionine = [protein]-L-isoaspartate alpha-methyl ester + S-adenosyl-L-homocysteine. Its function is as follows. Catalyzes the methyl esterification of L-isoaspartyl residues in peptides and proteins that result from spontaneous decomposition of normal L-aspartyl and L-asparaginyl residues. It plays a role in the repair and/or degradation of damaged proteins. The protein is Protein-L-isoaspartate O-methyltransferase of Rhodopseudomonas palustris (strain BisA53).